A 432-amino-acid chain; its full sequence is Pachytene checkpoint protein 2 homolog (432 aa).

Met-1 bears the N-acetylmethionine mark. 179 to 186 (GPPGTGKT) lines the ATP pocket.

This sequence belongs to the AAA ATPase family. PCH2 subfamily. In terms of assembly, specifically interacts with the ligand binding domain of the thyroid receptor (TR). This interaction does not require the presence of thyroid hormone for its interaction. Interacts with HPV16 E1. Interacts with proteasome subunit PSMA8; to participate in meiosis progression during spermatogenesis.

Functionally, plays a key role in chromosome recombination and chromosome structure development during meiosis. Required at early steps in meiotic recombination that leads to non-crossovers pathways. Also needed for efficient completion of homologous synapsis by influencing crossover distribution along the chromosomes affecting both crossovers and non-crossovers pathways. Also required for development of higher-order chromosome structures and is needed for synaptonemal-complex formation. In males, required for efficient synapsis of the sex chromosomes and for sex body formation. Promotes early steps of the DNA double-strand breaks (DSBs) repair process upstream of the assembly of RAD51 complexes. Required for depletion of HORMAD1 and HORMAD2 from synapsed chromosomes. Plays a role in mitotic spindle assembly checkpoint (SAC) activation. In Homo sapiens (Human), this protein is Pachytene checkpoint protein 2 homolog (TRIP13).